We begin with the raw amino-acid sequence, 142 residues long: Large ribosomal subunit protein uL13 (142 aa).

Belongs to the universal ribosomal protein uL13 family. Part of the 50S ribosomal subunit.

This protein is one of the early assembly proteins of the 50S ribosomal subunit, although it is not seen to bind rRNA by itself. It is important during the early stages of 50S assembly. This Chromohalobacter salexigens (strain ATCC BAA-138 / DSM 3043 / CIP 106854 / NCIMB 13768 / 1H11) protein is Large ribosomal subunit protein uL13.